Here is a 327-residue protein sequence, read N- to C-terminus: Succinylglutamate desuccinylase (327 aa).

Positions 53, 56, and 146 each coordinate Zn(2+). Glu209 is a catalytic residue.

Belongs to the AspA/AstE family. Succinylglutamate desuccinylase subfamily. Zn(2+) is required as a cofactor.

It carries out the reaction N-succinyl-L-glutamate + H2O = L-glutamate + succinate. It functions in the pathway amino-acid degradation; L-arginine degradation via AST pathway; L-glutamate and succinate from L-arginine: step 5/5. In terms of biological role, transforms N(2)-succinylglutamate into succinate and glutamate. The chain is Succinylglutamate desuccinylase from Serratia proteamaculans (strain 568).